The chain runs to 1188 residues: DNA polymerase (1188 aa).

Residues 1–74 (MALVPSPRAG…PAANNVSLTP (74 aa)) are disordered. Positions 31–41 (STAGAAPTATR) are enriched in low complexity.

Belongs to the DNA polymerase type-B family. Heterodimer with the terminal protein; this heterodimer binds to bp 9 to 18 of the genome. Forms a complex with viral pTP, DBP and hosts NFIA and POU2F1/OCT1 for initiation of replication.

It is found in the host nucleus. It carries out the reaction DNA(n) + a 2'-deoxyribonucleoside 5'-triphosphate = DNA(n+1) + diphosphate. Eukaryotic-type DNA polymerase involved in viral genomic replication. DNA synthesis is protein primed, and acts in a strand displacement replication. Assembles in complex with viral pTP, DBP, host NFIA and host POU2F1/OCT1 on viral origin of replication. The polymerase covalently transfers dCMP onto pTP, thereby initiating complementary strand synthesis. The polypeptide is DNA polymerase (Human adenovirus F serotype 40 (HAdV-40)).